A 75-amino-acid polypeptide reads, in one-letter code: uncharacterized protein (75 aa).

This is an uncharacterized protein from Homo sapiens (Human).